The primary structure comprises 124 residues: MAIIADPKTGKTYKKEIPAERMGSLVGRKIGDEIDGVFFDLVGYKLVVTGGSSIDGFPMRSDLQTQGKKQILVSYKKGYRGKNGIRKRITVRGSIIGSDISQINLKIVQYGPTPLEEKKDDQQA.

Belongs to the eukaryotic ribosomal protein eS6 family.

This is Small ribosomal subunit protein eS6 from Thermoplasma acidophilum (strain ATCC 25905 / DSM 1728 / JCM 9062 / NBRC 15155 / AMRC-C165).